The following is a 190-amino-acid chain: Xanthine phosphoribosyltransferase (190 aa).

2 residues coordinate xanthine: L20 and N27. 128-132 (ANGHA) is a 5-phospho-alpha-D-ribose 1-diphosphate binding site. K156 provides a ligand contact to xanthine.

This sequence belongs to the purine/pyrimidine phosphoribosyltransferase family. Xpt subfamily. As to quaternary structure, homodimer.

Its subcellular location is the cytoplasm. The enzyme catalyses XMP + diphosphate = xanthine + 5-phospho-alpha-D-ribose 1-diphosphate. It functions in the pathway purine metabolism; XMP biosynthesis via salvage pathway; XMP from xanthine: step 1/1. Functionally, converts the preformed base xanthine, a product of nucleic acid breakdown, to xanthosine 5'-monophosphate (XMP), so it can be reused for RNA or DNA synthesis. The protein is Xanthine phosphoribosyltransferase of Pseudomonas paraeruginosa (strain DSM 24068 / PA7) (Pseudomonas aeruginosa (strain PA7)).